The sequence spans 557 residues: Proline--tRNA ligase (557 aa).

This sequence belongs to the class-II aminoacyl-tRNA synthetase family. ProS type 1 subfamily. In terms of assembly, homodimer.

The protein resides in the cytoplasm. The enzyme catalyses tRNA(Pro) + L-proline + ATP = L-prolyl-tRNA(Pro) + AMP + diphosphate. In terms of biological role, catalyzes the attachment of proline to tRNA(Pro) in a two-step reaction: proline is first activated by ATP to form Pro-AMP and then transferred to the acceptor end of tRNA(Pro). As ProRS can inadvertently accommodate and process non-cognate amino acids such as alanine and cysteine, to avoid such errors it has two additional distinct editing activities against alanine. One activity is designated as 'pretransfer' editing and involves the tRNA(Pro)-independent hydrolysis of activated Ala-AMP. The other activity is designated 'posttransfer' editing and involves deacylation of mischarged Ala-tRNA(Pro). The misacylated Cys-tRNA(Pro) is not edited by ProRS. This chain is Proline--tRNA ligase, found in Baumannia cicadellinicola subsp. Homalodisca coagulata.